A 204-amino-acid polypeptide reads, in one-letter code: Recombination protein RecR (204 aa).

The C4-type zinc finger occupies 61 to 76 (CARCNTFSETQICSTC). One can recognise a Toprim domain in the interval 84 to 183 (SLLCIVETPA…KVTRIARGIP (100 aa)).

This sequence belongs to the RecR family.

In terms of biological role, may play a role in DNA repair. It seems to be involved in an RecBC-independent recombinational process of DNA repair. It may act with RecF and RecO. The chain is Recombination protein RecR from Polynucleobacter asymbioticus (strain DSM 18221 / CIP 109841 / QLW-P1DMWA-1) (Polynucleobacter necessarius subsp. asymbioticus).